A 201-amino-acid polypeptide reads, in one-letter code: tRNA (guanine-N(7)-)-methyltransferase (201 aa).

S-adenosyl-L-methionine is bound by residues E33, E58, D85, and D106. D106 is a catalytic residue. Residues K110, D142, and 180–183 (TTYE) contribute to the substrate site.

It belongs to the class I-like SAM-binding methyltransferase superfamily. TrmB family.

It catalyses the reaction guanosine(46) in tRNA + S-adenosyl-L-methionine = N(7)-methylguanosine(46) in tRNA + S-adenosyl-L-homocysteine. It participates in tRNA modification; N(7)-methylguanine-tRNA biosynthesis. Its function is as follows. Catalyzes the formation of N(7)-methylguanine at position 46 (m7G46) in tRNA. This is tRNA (guanine-N(7)-)-methyltransferase from Mesomycoplasma hyopneumoniae (strain J / ATCC 25934 / NCTC 10110) (Mycoplasma hyopneumoniae).